A 539-amino-acid polypeptide reads, in one-letter code: Eukaryotic translation initiation factor 3 subunit L (539 aa).

Residues 306-514 (TFSDILLYIQ…IHIADTKVSH (209 aa)) enclose the PCI domain.

This sequence belongs to the eIF-3 subunit L family. In terms of assembly, component of the eukaryotic translation initiation factor 3 (eIF-3) complex. The eIF-3 complex interacts with pix.

It localises to the cytoplasm. Functionally, component of the eukaryotic translation initiation factor 3 (eIF-3) complex, which is involved in protein synthesis of a specialized repertoire of mRNAs and, together with other initiation factors, stimulates binding of mRNA and methionyl-tRNAi to the 40S ribosome. The eIF-3 complex specifically targets and initiates translation of a subset of mRNAs involved in cell proliferation. The polypeptide is Eukaryotic translation initiation factor 3 subunit L (Drosophila yakuba (Fruit fly)).